The primary structure comprises 258 residues: Small ribosomal subunit protein mS40 (258 aa).

Residues 1 to 35 (MAASVLNTVLRRLPMLSLFRGSHRVQVPLQTLCTK) constitute a mitochondrion transit peptide. Ser-38 and Ser-49 each carry phosphoserine. Residues 214–258 (SRLRRLYQGHLQEESGPPPESMPKMPPRTPAEASSTGQTGPQSAL) form a disordered region. A compositionally biased stretch (pro residues) spans 229 to 242 (GPPPESMPKMPPRT). A compositionally biased stretch (polar residues) spans 245–258 (EASSTGQTGPQSAL).

This sequence belongs to the bacterial ribosomal protein bS18 family. Mitochondrion-specific ribosomal protein mS40 subfamily. As to quaternary structure, component of the mitochondrial small ribosomal subunit (mt-SSU). Mature mammalian 55S mitochondrial ribosomes consist of a small (28S) and a large (39S) subunit. The 28S small subunit contains a 12S ribosomal RNA (12S mt-rRNA) and 30 different proteins. The 39S large subunit contains a 16S rRNA (16S mt-rRNA), a copy of mitochondrial valine transfer RNA (mt-tRNA(Val)), which plays an integral structural role, and 52 different proteins. mS40 has a zinc binding site.

Its subcellular location is the mitochondrion. The polypeptide is Small ribosomal subunit protein mS40 (MRPS18B) (Homo sapiens (Human)).